The sequence spans 216 residues: Uracil phosphoribosyltransferase (216 aa).

Residues Arg32, Arg41, 75–78 (LGKI), and Lys77 each bind GTP. 5-phospho-alpha-D-ribose 1-diphosphate is bound at residue Arg85. GTP is bound at residue Arg102. A 5-phospho-alpha-D-ribose 1-diphosphate-binding site is contributed by Arg110. Arg131 provides a ligand contact to GTP. 5-phospho-alpha-D-ribose 1-diphosphate contacts are provided by residues Asp137 and 137–145 (DPMLATGGS). Tyr201 lines the D-ribose 5-phosphate pocket. Uracil contacts are provided by residues Leu202 and 207–209 (GDF). Residue Asp208 coordinates 5-phospho-alpha-D-ribose 1-diphosphate.

It belongs to the UPRTase family. Requires Mg(2+) as cofactor.

The enzyme catalyses UMP + diphosphate = 5-phospho-alpha-D-ribose 1-diphosphate + uracil. Its pathway is pyrimidine metabolism; UMP biosynthesis via salvage pathway; UMP from uracil: step 1/1. Allosterically activated by GTP. Functionally, catalyzes the conversion of uracil and 5-phospho-alpha-D-ribose 1-diphosphate (PRPP) to UMP and diphosphate. The chain is Uracil phosphoribosyltransferase (FUR1) from Lachancea kluyveri (Yeast).